A 418-amino-acid polypeptide reads, in one-letter code: MRRSMASNGHILTASSVVGASSAFQNPCLAKVEVQPNLPQRTVLGVIGDNEQRRRSVSRGGVPAKSLPGIENVLAFPGKILSANPAPVAPKPSFTVYVDEPTETYSVEIDCPSLGDEDSNIVKQNIHLLLDISEASPMVVDTSPQTSPEDDSVTDPDAVAVSEYIHEIHQYLREAELKHRPKAYYMRKQPDITSAMRTILVDWLVEVGEEYKLHTETLYLAMNYLDRFLSCMSVLRGKLQLVGTAAILLASKYEEIYPPDVDEFVYITDDTYSKKQLLRMEHVLLKVLAFDLTVPTVNQFLLQYLQRHAVSVKMEHLAMYMAELTLLEVEPFLKYVPSLTAAAAYCLANYALNKVFWPDTLEAFTGYALSDIAPCLSDLHQFCLGAPYQAQQAIREKYKTTKYMQVSLLEMPSILPLN.

The protein belongs to the cyclin family. Cyclin AB subfamily. Interacts with the CDK1 and the CDK2 protein kinases to form a serine/threonine kinase holoenzyme complex. The cyclin subunit imparts substrate specificity to the complex.

It is found in the nucleus. In terms of biological role, may be involved in the control of the cell cycle at the G1/S (start) and G2/M (mitosis) transitions. In Xenopus laevis (African clawed frog), this protein is Cyclin-A1 (ccna1).